Consider the following 44-residue polypeptide: uncharacterized protein (44 aa).

This is an uncharacterized protein from Vaccinia virus (strain Western Reserve) (VACV).